The sequence spans 358 residues: Dual-specificity RNA methyltransferase RlmN (358 aa).

Glu-86 acts as the Proton acceptor in catalysis. The Radical SAM core domain occupies 105–338; that stretch reads RHKRYTICVS…CTIRQSKGLD (234 aa). Cys-112 and Cys-343 form a disulfide bridge. Cys-119, Cys-123, and Cys-126 together coordinate [4Fe-4S] cluster. S-adenosyl-L-methionine is bound by residues 169–170, Ser-201, 224–226, and Asn-300; these read GE and SLH. Cys-343 acts as the S-methylcysteine intermediate in catalysis.

This sequence belongs to the radical SAM superfamily. RlmN family. [4Fe-4S] cluster serves as cofactor.

Its subcellular location is the cytoplasm. It carries out the reaction adenosine(2503) in 23S rRNA + 2 reduced [2Fe-2S]-[ferredoxin] + 2 S-adenosyl-L-methionine = 2-methyladenosine(2503) in 23S rRNA + 5'-deoxyadenosine + L-methionine + 2 oxidized [2Fe-2S]-[ferredoxin] + S-adenosyl-L-homocysteine. It catalyses the reaction adenosine(37) in tRNA + 2 reduced [2Fe-2S]-[ferredoxin] + 2 S-adenosyl-L-methionine = 2-methyladenosine(37) in tRNA + 5'-deoxyadenosine + L-methionine + 2 oxidized [2Fe-2S]-[ferredoxin] + S-adenosyl-L-homocysteine. Specifically methylates position 2 of adenine 2503 in 23S rRNA and position 2 of adenine 37 in tRNAs. m2A2503 modification seems to play a crucial role in the proofreading step occurring at the peptidyl transferase center and thus would serve to optimize ribosomal fidelity. This Campylobacter hominis (strain ATCC BAA-381 / DSM 21671 / CCUG 45161 / LMG 19568 / NCTC 13146 / CH001A) protein is Dual-specificity RNA methyltransferase RlmN.